The primary structure comprises 431 residues: Enolase (431 aa).

(2R)-2-phosphoglycerate is bound at residue glutamine 167. Glutamate 209 serves as the catalytic Proton donor. Aspartate 246, glutamate 290, and aspartate 317 together coordinate Mg(2+). (2R)-2-phosphoglycerate contacts are provided by lysine 342, arginine 371, serine 372, and lysine 393. Catalysis depends on lysine 342, which acts as the Proton acceptor.

Belongs to the enolase family. In terms of assembly, component of the RNA degradosome, a multiprotein complex involved in RNA processing and mRNA degradation. The cofactor is Mg(2+).

It localises to the cytoplasm. The protein resides in the secreted. The protein localises to the cell surface. It carries out the reaction (2R)-2-phosphoglycerate = phosphoenolpyruvate + H2O. It participates in carbohydrate degradation; glycolysis; pyruvate from D-glyceraldehyde 3-phosphate: step 4/5. In terms of biological role, catalyzes the reversible conversion of 2-phosphoglycerate (2-PG) into phosphoenolpyruvate (PEP). It is essential for the degradation of carbohydrates via glycolysis. The sequence is that of Enolase from Yersinia pseudotuberculosis serotype O:1b (strain IP 31758).